The following is a 159-amino-acid chain: Phosphopantetheine adenylyltransferase (159 aa).

A substrate-binding site is contributed by Thr10. Residues 10 to 11 (TF) and His18 contribute to the ATP site. Residues Lys42, Met74, and Arg88 each contribute to the substrate site. ATP contacts are provided by residues 89-91 (GLR), Glu99, and 124-130 (WSFISSS).

The protein belongs to the bacterial CoaD family. As to quaternary structure, homohexamer. Mg(2+) serves as cofactor.

It localises to the cytoplasm. It carries out the reaction (R)-4'-phosphopantetheine + ATP + H(+) = 3'-dephospho-CoA + diphosphate. Its pathway is cofactor biosynthesis; coenzyme A biosynthesis; CoA from (R)-pantothenate: step 4/5. Functionally, reversibly transfers an adenylyl group from ATP to 4'-phosphopantetheine, yielding dephospho-CoA (dPCoA) and pyrophosphate. The chain is Phosphopantetheine adenylyltransferase from Salmonella dublin (strain CT_02021853).